The sequence spans 658 residues: MSNTVSLQFPDGSVREYDASMTGAALAESISKSLAKKAVAYAVDGTVRDLSDPLGASGKVEIITREDPRALELIRHDTAHVLAEAVQELFPGTQVTIGPVIENGFYYDFARNEPFTLDDLPVIEKKMREIIQRNKPFTKEVWSREKAKQVFSDKGESYKVELVDAIPAGQDLKIYYQGDWFDLCRGPHMASTGQIGNSFKLMKVAGAYWRGDANNPMLTRIYGTAFANDNDLQAYLHMLEEAEKRDHRRLGREMDLFHFQEEGPGVVFWHAKGWKMFQNLVSYMRRRLDSHGYQEVNTPQVLDKSLWETSGHWGWYRDNMFKVTVAGDDTDDDRVFALKPMNCPGHVQIFKHGLKSYRDLPIKLAEFGNVHRYEPSGALHGLMRVRGFTQDDAHIFCTEEQMAAECLQINDLILSVYKDFGFEEITIKLSTRPEKRVGSDELWDRAESVMMTVLEQIRQQSNNIKTGILPGEGAFYGPKFEYTLKDAIGREWQCGTTQVDFNLPERFGAFYIGADSEKKQPVMIHRAICGSMERFLGILIENFAGHMPLWFAPVQVVVATITSDADEYAKEAAAKLKAAGLQVVTDLRNEKINYKVREHSLQKVPVILVCGKREAEEKTVNMRRLGSRDQESMTLDEAIARLCEEATPPDLLRLKNAG.

Positions 1–64 constitute a TGS domain; that stretch reads MSNTVSLQFP…GASGKVEIIT (64 aa). A catalytic region spans residues 246–548; that stretch reads DHRRLGREMD…LIENFAGHMP (303 aa). 3 residues coordinate Zn(2+): cysteine 343, histidine 394, and histidine 525.

This sequence belongs to the class-II aminoacyl-tRNA synthetase family. Homodimer. Requires Zn(2+) as cofactor.

Its subcellular location is the cytoplasm. The catalysed reaction is tRNA(Thr) + L-threonine + ATP = L-threonyl-tRNA(Thr) + AMP + diphosphate + H(+). Functionally, catalyzes the attachment of threonine to tRNA(Thr) in a two-step reaction: L-threonine is first activated by ATP to form Thr-AMP and then transferred to the acceptor end of tRNA(Thr). Also edits incorrectly charged L-seryl-tRNA(Thr). The polypeptide is Threonine--tRNA ligase (Brucella melitensis biotype 1 (strain ATCC 23456 / CCUG 17765 / NCTC 10094 / 16M)).